The following is a 113-amino-acid chain: UPF0342 protein SPy_0811/M5005_Spy0626 (113 aa).

This sequence belongs to the UPF0342 family.

This Streptococcus pyogenes serotype M1 protein is UPF0342 protein SPy_0811/M5005_Spy0626.